Reading from the N-terminus, the 467-residue chain is UDP-N-acetylmuramate--L-alanine ligase (467 aa).

An ATP-binding site is contributed by 112–118 (GTHGKTT).

Belongs to the MurCDEF family.

Its subcellular location is the cytoplasm. It catalyses the reaction UDP-N-acetyl-alpha-D-muramate + L-alanine + ATP = UDP-N-acetyl-alpha-D-muramoyl-L-alanine + ADP + phosphate + H(+). It functions in the pathway cell wall biogenesis; peptidoglycan biosynthesis. Functionally, cell wall formation. In Azoarcus sp. (strain BH72), this protein is UDP-N-acetylmuramate--L-alanine ligase.